Consider the following 500-residue polypeptide: Ferulic acid decarboxylase 1 (500 aa).

Residues asparagine 168, histidine 191, and glutamate 233 each contribute to the Mn(2+) site. Prenylated FMN is bound by residues 168–173 (NWSIAR), 190–191 (QH), and glutamate 233. The active-site Proton donor is glutamate 282. Lysine 391 contributes to the prenylated FMN binding site.

This sequence belongs to the UbiD family. UbiD-like/FDC subfamily. Homodimer. May form higher order oligomers. The cofactor is Mn(2+). It depends on prenylated FMN as a cofactor.

Its subcellular location is the cytoplasm. It carries out the reaction (E)-4-coumarate + H(+) = 4-vinylphenol + CO2. The enzyme catalyses (E)-cinnamate + H(+) = styrene + CO2. The catalysed reaction is (E)-ferulate + H(+) = 2-methoxy-4-vinylphenol + CO2. Functionally, catalyzes the reversible decarboxylation of aromatic carboxylic acids like ferulic acid, p-coumaric acid or cinnamic acid, producing the corresponding vinyl derivatives 4-vinylphenol, 4-vinylguaiacol, and styrene, respectively, which play the role of aroma metabolites. The polypeptide is Ferulic acid decarboxylase 1 (Aspergillus niger (strain ATCC MYA-4892 / CBS 513.88 / FGSC A1513)).